The chain runs to 222 residues: 26S proteasome non-ATPase regulatory subunit 9 (222 aa).

The region spanning 108–194 (QARDMAEARE…KPLNVTVIRR (87 aa)) is the PDZ domain. Residue S128 is modified to Phosphoserine.

The protein belongs to the proteasome subunit p27 family. As to quaternary structure, interacts with PSMC3. Part of a transient complex (modulator) containing PSMD9, PSMC6 and PSMC3 formed during the assembly of the 26S proteasome.

Functionally, acts as a chaperone during the assembly of the 26S proteasome, specifically of the base subcomplex of the PA700/19S regulatory complex (RC). During the base subcomplex assembly is part of an intermediate PSMD9:PSMC6:PSMC3 module, also known as modulator trimer complex; PSMD9 is released during the further base assembly process. The sequence is that of 26S proteasome non-ATPase regulatory subunit 9 (Psmd9) from Mus musculus (Mouse).